Here is a 300-residue protein sequence, read N- to C-terminus: tRNA dimethylallyltransferase (300 aa).

9–16 is a binding site for ATP; that stretch reads GPTASGKS. 11–16 contributes to the substrate binding site; the sequence is TASGKS. Positions 34 to 37 are interaction with substrate tRNA; it reads DSKQ.

This sequence belongs to the IPP transferase family. Monomer. The cofactor is Mg(2+).

It carries out the reaction adenosine(37) in tRNA + dimethylallyl diphosphate = N(6)-dimethylallyladenosine(37) in tRNA + diphosphate. Functionally, catalyzes the transfer of a dimethylallyl group onto the adenine at position 37 in tRNAs that read codons beginning with uridine, leading to the formation of N6-(dimethylallyl)adenosine (i(6)A). This Ehrlichia ruminantium (strain Welgevonden) protein is tRNA dimethylallyltransferase.